Reading from the N-terminus, the 224-residue chain is Germin-like protein 8-11 (224 aa).

A signal peptide spans methionine 1–alanine 22. A disulfide bridge links cysteine 32 with cysteine 47. The region spanning alanine 62–aspartate 212 is the Cupin type-1 domain. N-linked (GlcNAc...) asparagine glycosylation is present at asparagine 76. Mn(2+) contacts are provided by histidine 109, histidine 111, glutamate 116, and histidine 157.

It belongs to the germin family. In terms of assembly, oligomer (believed to be a pentamer but probably hexamer).

The protein localises to the secreted. Its subcellular location is the extracellular space. The protein resides in the apoplast. Plays a role in broad-spectrum disease resistance. Probably has no oxalate oxidase activity even if the active site is conserved. In Oryza sativa subsp. japonica (Rice), this protein is Germin-like protein 8-11.